A 319-amino-acid polypeptide reads, in one-letter code: NADH-quinone oxidoreductase subunit H 1 (319 aa).

A run of 9 helical transmembrane segments spans residues 5–25, 78–98, 109–129, 147–167, 179–199, 214–234, 238–258, 262–282, and 294–314; these read ILTA…AGVF, LAPA…AFGE, VMFL…GALA, LAYE…AGSL, VWFI…GIAA, LVGG…FLGE, ILLV…GPWL, IWFG…RAAL, and AWKV…FIVV.

The protein belongs to the complex I subunit 1 family. NDH-1 is composed of 14 different subunits. Subunits NuoA, H, J, K, L, M, N constitute the membrane sector of the complex.

It is found in the cell inner membrane. The catalysed reaction is a quinone + NADH + 5 H(+)(in) = a quinol + NAD(+) + 4 H(+)(out). NDH-1 shuttles electrons from NADH, via FMN and iron-sulfur (Fe-S) centers, to quinones in the respiratory chain. The immediate electron acceptor for the enzyme in this species is believed to be ubiquinone. Couples the redox reaction to proton translocation (for every two electrons transferred, four hydrogen ions are translocated across the cytoplasmic membrane), and thus conserves the redox energy in a proton gradient. This subunit may bind ubiquinone. The sequence is that of NADH-quinone oxidoreductase subunit H 1 from Rhodopseudomonas palustris (strain BisA53).